A 365-amino-acid polypeptide reads, in one-letter code: Protein BIIDXI (365 aa).

Positions 1-21 are cleaved as a signal peptide; the sequence is MKEMGVIVLLLLHSFFYVAFC. 3 N-linked (GlcNAc...) asparagine glycosylation sites follow: Asn48, Asn121, and Asn208.

In terms of assembly, interacts with PME3. As to expression, mainly expressed in vascular tissues of roots, leaves, stamens and petals.

It is found in the secreted. The protein localises to the cell wall. Together with At5g11420, acts as a positive regulator of PME3 activity during several developmental processes, including reproductive organ development, hypocotyls elongation, seed germination and endosperm (testa) rupture at the micropyle, probably by modulating the pectin methylation status in cell walls. Involved in the regulation of pectin methylation degree to modulate cell wall physiology during cell separation, hypocotyl growth and embryo development. Required during embryo development, especially to regulate homogalacturonans (HG) methyl esterification in endosperm cell walls, a process related to embryo bending. Also implicated in hypocotyl growth and gravitropic response via the regulation of auxin efflux. Also regulates cell wall pectin upon root-knot nematode Meloidogyne incognita infection. This Arabidopsis thaliana (Mouse-ear cress) protein is Protein BIIDXI.